We begin with the raw amino-acid sequence, 514 residues long: Maturase K (514 aa).

The protein belongs to the intron maturase 2 family. MatK subfamily.

The protein resides in the plastid. It is found in the chloroplast. Functionally, usually encoded in the trnK tRNA gene intron. Probably assists in splicing its own and other chloroplast group II introns. This chain is Maturase K, found in Erythronium grandiflorum (Yellow avalanche-lily).